The following is a 232-amino-acid chain: Cytidylate kinase (232 aa).

The tract at residues 1–21 is disordered; that stretch reads MSEDTPLVVAMDGPSGTGKSS. 13–21 serves as a coordination point for ATP; it reads GPSGTGKSS.

The protein belongs to the cytidylate kinase family. Type 1 subfamily.

The protein resides in the cytoplasm. It carries out the reaction CMP + ATP = CDP + ADP. The catalysed reaction is dCMP + ATP = dCDP + ADP. The protein is Cytidylate kinase of Nocardia farcinica (strain IFM 10152).